The chain runs to 276 residues: Formamidopyrimidine-DNA glycosylase (276 aa).

Pro-2 acts as the Schiff-base intermediate with DNA in catalysis. Glu-3 functions as the Proton donor in the catalytic mechanism. The active-site Proton donor; for beta-elimination activity is Lys-58. Residues His-94, Arg-112, and Arg-157 each coordinate DNA. The FPG-type zinc-finger motif lies at 242 to 276 (FVYDRAGLPCRVCGTPIKQIVQGQRSTYFCPTCQR). The active-site Proton donor; for delta-elimination activity is the Arg-266.

Belongs to the FPG family. As to quaternary structure, monomer. Zn(2+) serves as cofactor.

The enzyme catalyses Hydrolysis of DNA containing ring-opened 7-methylguanine residues, releasing 2,6-diamino-4-hydroxy-5-(N-methyl)formamidopyrimidine.. It catalyses the reaction 2'-deoxyribonucleotide-(2'-deoxyribose 5'-phosphate)-2'-deoxyribonucleotide-DNA = a 3'-end 2'-deoxyribonucleotide-(2,3-dehydro-2,3-deoxyribose 5'-phosphate)-DNA + a 5'-end 5'-phospho-2'-deoxyribonucleoside-DNA + H(+). Its function is as follows. Involved in base excision repair of DNA damaged by oxidation or by mutagenic agents. Acts as a DNA glycosylase that recognizes and removes damaged bases. Has a preference for oxidized purines, such as 7,8-dihydro-8-oxoguanine (8-oxoG). Has AP (apurinic/apyrimidinic) lyase activity and introduces nicks in the DNA strand. Cleaves the DNA backbone by beta-delta elimination to generate a single-strand break at the site of the removed base with both 3'- and 5'-phosphates. This is Formamidopyrimidine-DNA glycosylase from Paraburkholderia phytofirmans (strain DSM 17436 / LMG 22146 / PsJN) (Burkholderia phytofirmans).